Reading from the N-terminus, the 371-residue chain is Histidinol-phosphate aminotransferase (371 aa).

Position 229 is an N6-(pyridoxal phosphate)lysine (K229).

This sequence belongs to the class-II pyridoxal-phosphate-dependent aminotransferase family. Histidinol-phosphate aminotransferase subfamily. In terms of assembly, homodimer. Requires pyridoxal 5'-phosphate as cofactor.

It carries out the reaction L-histidinol phosphate + 2-oxoglutarate = 3-(imidazol-4-yl)-2-oxopropyl phosphate + L-glutamate. It participates in amino-acid biosynthesis; L-histidine biosynthesis; L-histidine from 5-phospho-alpha-D-ribose 1-diphosphate: step 7/9. The protein is Histidinol-phosphate aminotransferase of Roseiflexus castenholzii (strain DSM 13941 / HLO8).